Reading from the N-terminus, the 316-residue chain is Nucleoprotein (316 aa).

Positions 43, 46, 76, 122, and 240 each coordinate RNA.

The protein belongs to the tenuiviruses nucleocapsid protein family.

The protein localises to the virion. It localises to the host cytoplasm. In terms of biological role, encapsidates the genome, protecting it from nucleases. The encapsidated genomic RNA is termed the nucleocapsid (NC), and serves as template for viral transcription and replication. The protein is Nucleoprotein of Maize stripe virus (MStV).